The chain runs to 392 residues: DNA replication and repair protein RecF (392 aa).

33-40 (GANGAGKT) contributes to the ATP binding site.

Belongs to the RecF family.

The protein localises to the cytoplasm. The RecF protein is involved in DNA metabolism; it is required for DNA replication and normal SOS inducibility. RecF binds preferentially to single-stranded, linear DNA. It also seems to bind ATP. This chain is DNA replication and repair protein RecF, found in Caulobacter sp. (strain K31).